The primary structure comprises 428 residues: Adenylosuccinate synthetase (428 aa).

Residues 11–17 (GDEGKGK) and 39–41 (GHT) each bind GTP. Residue D12 is the Proton acceptor of the active site. The Mg(2+) site is built by D12 and G39. Residues 12–15 (DEGK), 37–40 (NAGH), T130, R144, N226, T241, and R305 each bind IMP. The Proton donor role is filled by H40. Substrate is bound at residue 301–307 (VTTGRKR). GTP is bound by residues R307, 333–335 (KLD), and 415–417 (GTG).

The protein belongs to the adenylosuccinate synthetase family. In terms of assembly, homodimer. Requires Mg(2+) as cofactor.

The protein resides in the cytoplasm. The catalysed reaction is IMP + L-aspartate + GTP = N(6)-(1,2-dicarboxyethyl)-AMP + GDP + phosphate + 2 H(+). It functions in the pathway purine metabolism; AMP biosynthesis via de novo pathway; AMP from IMP: step 1/2. Functionally, plays an important role in the de novo pathway and in the salvage pathway of purine nucleotide biosynthesis. Catalyzes the first committed step in the biosynthesis of AMP from IMP. The protein is Adenylosuccinate synthetase of Komagataella phaffii (strain GS115 / ATCC 20864) (Yeast).